A 433-amino-acid polypeptide reads, in one-letter code: MTAASRANPYSIVSSEEDGLHLVTMSGANGFGNGKVHTRRRCRNRFVKKNGQCNIEFANMDEKSQRYLADMFTTCVDIRWRYMLLIFSLAFLASWLLFGIIFWVIAVAHGDLEPAEGRGRTPCVMQVHGFMAAFLFSIETQTTIGYGLRCVTEECPVAVFMVVAQSIVGCIIDSFMIGAIMAKMARPKKRAQTLLFSHNAVVALRDGKLCLMWRVGNLRKSHIVEAHVRAQLIKPRVTEEGEYIPLDQIDIDVGFDKGLDRIFLVSPITILHEIDEASPLFGISRQDLETDDFEIVVILEGMVEATAMTTQARSSYLANEILWGHRFEPVLFEEKNQYKIDYSHFHKTYEVPSTPRCSAKDLVENKFLLPSANSFCYENELAFLSRDEEDEADGDQDGRSRDGLSPQARHDFDRLQAGGGVLEQRPYRRESEI.

The Cytoplasmic portion of the chain corresponds to 1 to 77 (MTAASRANPY…LADMFTTCVD (77 aa)). Cys-75 is subject to S-nitrosocysteine. The helical transmembrane segment at 78–104 (IRWRYMLLIFSLAFLASWLLFGIIFWV) threads the bilayer. A 1,2-diacyl-sn-glycero-3-phospho-(1D-myo-inositol-4,5-bisphosphate) contacts are provided by Arg-79 and Arg-81. Over 105–129 (IAVAHGDLEPAEGRGRTPCVMQVHG) the chain is Extracellular. Residues Cys-123 and Cys-155 are joined by a disulfide bond. Residues 130–146 (FMAAFLFSIETQTTIGY) constitute an intramembrane region (helical; Pore-forming). 4 residues coordinate K(+): Thr-143, Ile-144, Gly-145, and Tyr-146. The Selectivity filter signature appears at 143–148 (TIGYGL). Topologically, residues 147 to 155 (GLRCVTEEC) are extracellular. Residues 156–183 (PVAVFMVVAQSIVGCIIDSFMIGAIMAK) form a helical membrane-spanning segment. Lys-183 and Lys-188 together coordinate a 1,2-diacyl-sn-glycero-3-phospho-(1D-myo-inositol-4,5-bisphosphate). Residues 184 to 433 (MARPKKRAQT…QRPYRRESEI (250 aa)) are Cytoplasmic-facing. The disordered stretch occupies residues 387–433 (DEEDEADGDQDGRSRDGLSPQARHDFDRLQAGGGVLEQRPYRRESEI). The segment covering 396–414 (QDGRSRDGLSPQARHDFDR) has biased composition (basic and acidic residues). Positions 431–433 (SEI) match the PDZ-binding motif.

It belongs to the inward rectifier-type potassium channel (TC 1.A.2.1) family. KCNJ12 subfamily. As to quaternary structure, homotetramer. Forms heteromer with KCNJ4. Can form heteromeric channels with Kir2.6/KCNJ18. Association, via its PDZ-recognition domain, with LIN7A, LIN7B, LIN7C, DLG1, CASK and APBA1 plays a key role in its localization and trafficking.

It is found in the membrane. It localises to the cell membrane. Its subcellular location is the sarcolemma. The protein localises to the T-tubule. It catalyses the reaction K(+)(in) = K(+)(out). With respect to regulation, activated by phosphatidylinositol 4,5-biphosphate (PtdIns(4,5)P2). PtdIns(4,5)P2 binding to the cytoplasmic side of the channel triggers a conformation change leading to channel opening. Inhibited by Ba(2+). Its function is as follows. Inward rectifying potassium channel that probably participates in controlling the resting membrane potential in electrically excitable cells. Probably participates in establishing action potential waveform and excitability of neuronal and muscle tissues. Inward rectifier potassium channels are characterized by a greater tendency to allow potassium to flow into the cell rather than out of it. Their voltage dependence is regulated by the concentration of extracellular potassium; as external potassium is raised, the voltage range of the channel opening shifts to more positive voltages. The inward rectification is mainly due to the blockage of outward current by internal magnesium. The chain is ATP-sensitive inward rectifier potassium channel 12 (KCNJ12) from Homo sapiens (Human).